Consider the following 230-residue polypeptide: UPF0173 metal-dependent hydrolase Sca_1312 (230 aa).

Belongs to the UPF0173 family.

This is UPF0173 metal-dependent hydrolase Sca_1312 from Staphylococcus carnosus (strain TM300).